We begin with the raw amino-acid sequence, 196 residues long: CASP-like protein 2A2 (196 aa).

The Cytoplasmic portion of the chain corresponds to M1–H26. A helical transmembrane segment spans residues F27–L47. Over K48–C68 the chain is Extracellular. Residues L69 to V89 traverse the membrane as a helical segment. The Cytoplasmic segment spans residues P90–S98. The chain crosses the membrane as a helical span at residues W99–A119. Residues T120 to R148 are Extracellular-facing. The helical transmembrane segment at A149–L169 threads the bilayer. Topologically, residues S170–I196 are cytoplasmic.

The protein belongs to the Casparian strip membrane proteins (CASP) family. In terms of assembly, homodimer and heterodimers.

The protein localises to the cell membrane. The chain is CASP-like protein 2A2 from Picea sitchensis (Sitka spruce).